Reading from the N-terminus, the 887-residue chain is ATP-dependent DNA helicase srs2 (887 aa).

The UvrD-like helicase ATP-binding domain maps to 9–304 (KFLNEEQRIS…LHLERNYRSA (296 aa)). Residues 33-38 (GSGKTR) and R302 each bind ATP. The region spanning 305-597 (KPILELALSI…TISTLHAAKG (293 aa)) is the UvrD-like helicase C-terminal domain.

It belongs to the helicase family. UvrD subfamily.

The protein localises to the nucleus. The catalysed reaction is Couples ATP hydrolysis with the unwinding of duplex DNA by translocating in the 3'-5' direction.. It catalyses the reaction ATP + H2O = ADP + phosphate + H(+). ATP-dependent DNA helicase involved in DNA repair at least for UV-induced lesions. Also aids the recombinational repair of camptothecin-induced collapsed replication forks. In Schizosaccharomyces pombe (strain 972 / ATCC 24843) (Fission yeast), this protein is ATP-dependent DNA helicase srs2 (srs2).